Here is a 319-residue protein sequence, read N- to C-terminus: MEMIRGRGIPNGVVQVPNLSANNLLQKFFIASNHFCQRDSEHGENQQEAKKREDEAEEDEKDVELTLGLSLNGQFGTDPRSRKRRHFELGRSSSIPEGFVFDEQRSGGGNGGDMRRIVGRGGSDMFQLDRTRSLPVVTEMDIEKERKVSEKTRAFMESPVTNRGAYLTKDKNRGQAVETEKPRAFLEFKIPPTKEGKKEKDRLVVTGPVNGKGKNGNTAKKQKNNVENSGMEKARNILEDMPCVSTRDVGADGKRVEGFLYWYGGNKEEVKIVCVCHGSFLSPAEFVRHGGGTVSDDDGGDVMINPLRHIVVKLPSSSI.

The span at 39 to 54 (DSEHGENQQEAKKRED) shows a compositional bias: basic and acidic residues. Disordered stretches follow at residues 39–63 (DSEHGENQQEAKKREDEAEEDEKDV), 99–120 (FVFDEQRSGGGNGGDMRRIVGR), and 205–228 (VTGPVNGKGKNGNTAKKQKNNVEN).

This sequence belongs to the Ninja family. As to quaternary structure, interacts with ABI5/DPBF1, AREB3/DPBF3, EEL/DPBF4, ABF1 and ABF3/DPBF5. Predominantly expressed in roots and seedlings.

Its subcellular location is the nucleus. Its function is as follows. Acts as a negative regulator of abscisic acid (ABA) and salinity responses. This is Ninja-family protein AFP4 (AFP4) from Arabidopsis thaliana (Mouse-ear cress).